Here is a 595-residue protein sequence, read N- to C-terminus: Probable L-gulonolactone oxidase 1 (595 aa).

An N-terminal signal peptide occupies residues 1–18; that stretch reads MAFWLSLIFFCFCTFASS. The region spanning 47-229 is the FAD-binding PCMH-type domain; sequence SICEAAKVEY…SQVTFQLQPM (183 aa).

The protein belongs to the oxygen-dependent FAD-linked oxidoreductase family. Requires FAD as cofactor.

It carries out the reaction L-gulono-1,4-lactone + O2 = L-ascorbate + H2O2 + H(+). Its pathway is cofactor biosynthesis; L-ascorbate biosynthesis. Its function is as follows. May be involved in the biosynthesis of ascorbic acid. This chain is Probable L-gulonolactone oxidase 1, found in Arabidopsis thaliana (Mouse-ear cress).